The primary structure comprises 677 residues: Threonine--tRNA ligase (677 aa).

The TGS domain maps to 1-59 (MAQATISITVNGEAKEVEATTTGVELFAEDKNIIAVKINGENRDLYTPLNDGDTVDPIA). Residues 255–561 (DHRKLGAEMD…LLEHYAGAFP (307 aa)) form a catalytic region. Cys360, His411, and His538 together coordinate Zn(2+).

This sequence belongs to the class-II aminoacyl-tRNA synthetase family. In terms of assembly, homodimer. It depends on Zn(2+) as a cofactor.

It is found in the cytoplasm. It carries out the reaction tRNA(Thr) + L-threonine + ATP = L-threonyl-tRNA(Thr) + AMP + diphosphate + H(+). Catalyzes the attachment of threonine to tRNA(Thr) in a two-step reaction: L-threonine is first activated by ATP to form Thr-AMP and then transferred to the acceptor end of tRNA(Thr). Also edits incorrectly charged L-seryl-tRNA(Thr). The chain is Threonine--tRNA ligase from Bifidobacterium longum (strain NCC 2705).